The chain runs to 429 residues: MSEITDVYAREILDSRGNPTLEVEVFLESGVMGRAAVPSGASTGEREALELRDGDKSRYLGKGVLKAVDNVNNIIAEQIIGMEATDQIGIDQRMLDLDGTEYKSNLGANAILGVSLAVAKAAAEEVGLPLYQYIGGSNAKELPLPMMNILNGGAHADNNVDIQEFMIMPAGAKSFAEALRMGAEIFHALKGVLKGKGYNTAVGDEGGFAPNLKSNEEALEVIMDAIQKAGYKPGEEVLLALDVASSELFNDGVYTLENEAEPKKTPAQMVDFYENLVNKYPIVSIEDGMAENDWDGWKLLTDRLGKRIQIVGDDLFVTNPRILKEGIQKGIANSILIKLNQIGSLTETLDAIEMAKRAGYTCVISHRSGETEDTTLADLSVAVNAGQIKTGSLCRTDRVAKYNQLLRIEDELDTTALFRGKDVFYNIRK.

Gln163 lines the (2R)-2-phosphoglycerate pocket. The active-site Proton donor is the Glu205. Residues Asp242, Glu286, and Asp313 each contribute to the Mg(2+) site. Positions 338, 367, 368, and 389 each coordinate (2R)-2-phosphoglycerate. Lys338 serves as the catalytic Proton acceptor.

Belongs to the enolase family. It depends on Mg(2+) as a cofactor.

Its subcellular location is the cytoplasm. The protein localises to the secreted. The protein resides in the cell surface. It carries out the reaction (2R)-2-phosphoglycerate = phosphoenolpyruvate + H2O. It participates in carbohydrate degradation; glycolysis; pyruvate from D-glyceraldehyde 3-phosphate: step 4/5. Catalyzes the reversible conversion of 2-phosphoglycerate (2-PG) into phosphoenolpyruvate (PEP). It is essential for the degradation of carbohydrates via glycolysis. This chain is Enolase, found in Geobacter metallireducens (strain ATCC 53774 / DSM 7210 / GS-15).